Reading from the N-terminus, the 529-residue chain is Peptide chain release factor 3 (529 aa).

A tr-type G domain is found at 11-280 (AKRRTFAIIS…GLVEWAPAPM (270 aa)). GTP-binding positions include 20-27 (SHPDAGKT), 88-92 (DTPGH), and 142-145 (NKLD).

It belongs to the TRAFAC class translation factor GTPase superfamily. Classic translation factor GTPase family. PrfC subfamily.

It localises to the cytoplasm. Its function is as follows. Increases the formation of ribosomal termination complexes and stimulates activities of RF-1 and RF-2. It binds guanine nucleotides and has strong preference for UGA stop codons. It may interact directly with the ribosome. The stimulation of RF-1 and RF-2 is significantly reduced by GTP and GDP, but not by GMP. This is Peptide chain release factor 3 from Shigella dysenteriae serotype 1 (strain Sd197).